The primary structure comprises 537 residues: Ceramide kinase (537 aa).

The essential for enzyme activity stretch occupies residues M1–W115. The required for binding to sulfatide and phosphoinositides stretch occupies residues M1–K125. The region spanning S128 to S278 is the DAGKc domain. Residues N138–F140 and T170–N174 contribute to the ATP site. G195–G198 contacts substrate. Catalysis depends on D197, which acts as the Proton donor/acceptor. ATP is bound by residues E202, G239 to T241, R304, and R310. A phosphoserine mark is found at S340 and S408. D502–E504 contacts ATP.

It depends on Ca(2+) as a cofactor. The cofactor is Mg(2+). In terms of tissue distribution, high level expression in heart, brain, skeletal muscle, kidney and liver; moderate in peripheral blood leukocytes and thymus; very low in spleen, small intestine, placenta and lung.

Its subcellular location is the cytoplasm. The protein localises to the cell membrane. The enzyme catalyses an N-acylsphing-4-enine + ATP = an N-acylsphing-4-enine 1-phosphate + ADP + H(+). It catalyses the reaction N-(hexanoyl)sphing-4-enine + ATP = N-hexanoylsphing-4-enine 1-phosphate + ADP + H(+). It carries out the reaction N-(acetyl)-sphing-4-enine + ATP = N-(acetyl)-sphing-4-enine-1-phosphate + ADP + H(+). The catalysed reaction is N-hexadecanoylsphing-4-enine + ATP = N-(hexadecanoyl)-sphing-4-enine-1-phosphate + ADP + H(+). The enzyme catalyses N-hexanoyl-(4R)-hydroxysphinganine + ATP = N-hexanoyl-(4R)-hydroxysphinganine-1-phosphate + ADP + H(+). Its activity is regulated as follows. Inhibited by sulfatide. Inhibited by sphinganine, sphingenine, and N,N-Dimethylsphingosine (DMS). Cardiolipin at 0.1 uM significantly increases activity, whereas at concentrations &gt;1 uM has an inhibitory effect. Functionally, catalyzes specifically the phosphorylation of ceramide to form ceramide 1-phosphate. Acts efficiently on natural and analog ceramides (C6, C8, C16 ceramides, and C8-dihydroceramide), to a lesser extent on C2-ceramide and C6-dihydroceramide, but not on other lipids, such as various sphingosines. Shows a greater preference for D-erythro isomer of ceramides. Binds phosphoinositides. The polypeptide is Ceramide kinase (CERK) (Homo sapiens (Human)).